The following is a 701-amino-acid chain: Polyribonucleotide nucleotidyltransferase (701 aa).

2 residues coordinate Mg(2+): aspartate 487 and aspartate 493. The 60-residue stretch at 554–613 (PTMIAMKIDTDKIRDVIGKGGATIRAICEETKASIDIEDDGSIKIFGESKEAAEAARQRV) folds into the KH domain. In terms of domain architecture, S1 motif spans 623-691 (GKIYIGKVER…NRGRIKLSIK (69 aa)).

It belongs to the polyribonucleotide nucleotidyltransferase family. In terms of assembly, component of the RNA degradosome, which is a multiprotein complex involved in RNA processing and mRNA degradation. The cofactor is Mg(2+).

The protein resides in the cytoplasm. The catalysed reaction is RNA(n+1) + phosphate = RNA(n) + a ribonucleoside 5'-diphosphate. Involved in mRNA degradation. Catalyzes the phosphorolysis of single-stranded polyribonucleotides processively in the 3'- to 5'-direction. The sequence is that of Polyribonucleotide nucleotidyltransferase from Pseudomonas syringae pv. syringae (strain B728a).